Consider the following 746-residue polypeptide: Transcription factor pbcR (746 aa).

The segment covering 1 to 12 (MYPWSSTGTSPF) has biased composition (polar residues). The segment at 1–40 (MYPWSSTGTSPFSHPDNEGAESGDMSMGEEQQQPHQRRQK) is disordered. The segment at residues 47–76 (CQSCRASKVRCDQPNPGMPCLRCQKSGKPC) is a DNA-binding region (zn(2)-C6 fungal-type). The disordered stretch occupies residues 109–131 (ELQDSAGDGETAHSTALRSPSQL). Polar residues predominate over residues 120-131 (AHSTALRSPSQL).

Its subcellular location is the nucleus. Its function is as follows. Transcription factor; part of the gene cluster that mediates the biosynthesis of the diterpene ent-pimara-8(14),15-diene (PD). Acts as a positive regulator for the cluster gene. Down-regulates the expression of the penicillin gene cluster, two putative polyketide clusters, and one putative nonribosomal peptide cluster. This Emericella nidulans (strain FGSC A4 / ATCC 38163 / CBS 112.46 / NRRL 194 / M139) (Aspergillus nidulans) protein is Transcription factor pbcR.